A 266-amino-acid polypeptide reads, in one-letter code: HLA class II histocompatibility antigen, DR beta 5 chain (266 aa).

The first 29 residues, 1–29 (MVCLKLPGGSYMAKLTVTLMVLSSPLALA), serve as a signal peptide directing secretion. The interval 30–124 (GDTRPRFLQQ…GESFTVQRRV (95 aa)) is beta-1. Topologically, residues 30 to 227 (GDTRPRFLQQ…RAQSESAQSK (198 aa)) are extracellular. 2 disulfides stabilise this stretch: cysteine 44–cysteine 108 and cysteine 146–cysteine 202. N-linked (GlcNAc...) asparagine glycosylation occurs at asparagine 48. The segment at 125-227 (EPKVTVYPAR…RAQSESAQSK (103 aa)) is beta-2. Residues 126 to 214 (PKVTVYPART…EHPSVTSPLT (89 aa)) enclose the Ig-like C1-type domain. A helical transmembrane segment spans residues 228-248 (MLSGVGGFVLGLLFLGAGLFI). The Cytoplasmic segment spans residues 249–266 (YFKNQKGHSGLHPTGLVS).

It belongs to the MHC class II family. Heterodimer of an alpha and a beta subunit; also referred as MHC class II molecule. In the endoplasmic reticulum (ER) it forms a heterononamer; 3 MHC class II molecules bind to a CD74 homotrimer (also known as invariant chain or HLA class II histocompatibility antigen gamma chain). In the endosomal/lysosomal system; CD74 undergoes sequential degradation by various proteases; leaving a small fragment termed CLIP on each MHC class II molecule. MHC class II molecule interacts with HLA_DM, and HLA_DO in B-cells, in order to release CLIP and facilitate the binding of antigenic peptides. Ubiquitinated by MARCH1 and MARCH8 at Lys-254 leading to down-regulation of MHC class II.

It is found in the cell membrane. The protein resides in the endoplasmic reticulum membrane. It localises to the golgi apparatus. Its subcellular location is the trans-Golgi network membrane. The protein localises to the endosome membrane. It is found in the lysosome membrane. The protein resides in the late endosome membrane. Binds peptides derived from antigens that access the endocytic route of antigen presenting cells (APC) and presents them on the cell surface for recognition by the CD4 T-cells. The peptide binding cleft accommodates peptides of 10-30 residues. The peptides presented by MHC class II molecules are generated mostly by degradation of proteins that access the endocytic route, where they are processed by lysosomal proteases and other hydrolases. Exogenous antigens that have been endocytosed by the APC are thus readily available for presentation via MHC II molecules, and for this reason this antigen presentation pathway is usually referred to as exogenous. As membrane proteins on their way to degradation in lysosomes as part of their normal turn-over are also contained in the endosomal/lysosomal compartments, exogenous antigens must compete with those derived from endogenous components. Autophagy is also a source of endogenous peptides, autophagosomes constitutively fuse with MHC class II loading compartments. In addition to APCs, other cells of the gastrointestinal tract, such as epithelial cells, express MHC class II molecules and CD74 and act as APCs, which is an unusual trait of the GI tract. To produce a MHC class II molecule that presents an antigen, three MHC class II molecules (heterodimers of an alpha and a beta chain) associate with a CD74 trimer in the ER to form a heterononamer. Soon after the entry of this complex into the endosomal/lysosomal system where antigen processing occurs, CD74 undergoes a sequential degradation by various proteases, including CTSS and CTSL, leaving a small fragment termed CLIP (class-II-associated invariant chain peptide). The removal of CLIP is facilitated by HLA-DM via direct binding to the alpha-beta-CLIP complex so that CLIP is released. HLA-DM stabilizes MHC class II molecules until primary high affinity antigenic peptides are bound. The MHC II molecule bound to a peptide is then transported to the cell membrane surface. In B-cells, the interaction between HLA-DM and MHC class II molecules is regulated by HLA-DO. Primary dendritic cells (DCs) also to express HLA-DO. Lysosomal microenvironment has been implicated in the regulation of antigen loading into MHC II molecules, increased acidification produces increased proteolysis and efficient peptide loading. The chain is HLA class II histocompatibility antigen, DR beta 5 chain from Homo sapiens (Human).